We begin with the raw amino-acid sequence, 131 residues long: Histone H2B.2 (131 aa).

Residues 1 to 20 are compositionally biased toward basic and acidic residues; sequence MAPPKAEKKPASKAPAEKKP. Positions 1–39 are disordered; sequence MAPPKAEKKPASKAPAEKKPAAKKTASSTDAKKRTKTRK. Residues Lys8 and Lys9 each carry the N6-acetyllysine; alternate modification. Glycyl lysine isopeptide (Lys-Gly) (interchain with G-Cter in SUMO); alternate cross-links involve residues Lys8 and Lys9. Ser12 bears the Phosphoserine mark. Lys13 is subject to N6-acetyllysine. Lys18 bears the N6-acetyllysine; alternate mark. A Glycyl lysine isopeptide (Lys-Gly) (interchain with G-Cter in SUMO); alternate cross-link involves residue Lys18. Lys19 participates in a covalent cross-link: Glycyl lysine isopeptide (Lys-Gly) (interchain with G-Cter in SUMO). Lys125 participates in a covalent cross-link: Glycyl lysine isopeptide (Lys-Gly) (interchain with G-Cter in ubiquitin).

It belongs to the histone H2B family. In terms of assembly, the nucleosome is a histone octamer containing two molecules each of H2A, H2B, H3 and H4 assembled in one H3-H4 heterotetramer and two H2A-H2B heterodimers. The octamer wraps approximately 147 bp of DNA. In terms of processing, monoubiquitinated to form H2BK123ub1. H2BK123ub1 gives a specific tag for epigenetic transcriptional activation and is also prerequisite for H3K4me and H3K79me formation. H2BK123ub1 also modulates the formation of double-strand breaks during meiosis and is a prerequisite for DNA-damage checkpoint activation. Post-translationally, phosphorylated by STE20 to form H2BS10ph during progression through meiotic prophase. May be correlated with chromosome condensation. Acetylated by GCN5 to form H2BK11ac and H2BK16ac. H2BK16ac can also be formed by ESA1. Acetylation of N-terminal lysines and particularly formation of H2BK11acK16ac has a positive effect on transcription. In terms of processing, sumoylation to form H2BK6su or H2BK7su, and probably also H2BK16su or H2BK17su, occurs preferentially near the telomeres and represses gene transcription.

It localises to the nucleus. The protein resides in the chromosome. Its function is as follows. Core component of nucleosome. Nucleosomes wrap and compact DNA into chromatin, limiting DNA accessibility to the cellular machineries which require DNA as a template. Histones thereby play a central role in transcription regulation, DNA repair, DNA replication and chromosomal stability. DNA accessibility is regulated via a complex set of post-translational modifications of histones, also called histone code, and nucleosome remodeling. This Scheffersomyces stipitis (strain ATCC 58785 / CBS 6054 / NBRC 10063 / NRRL Y-11545) (Yeast) protein is Histone H2B.2 (HTB2).